Reading from the N-terminus, the 304-residue chain is Putative S-adenosyl-L-methionine-dependent methyltransferase MAP_3385 (304 aa).

S-adenosyl-L-methionine contacts are provided by residues Asp129 and 158 to 159; that span reads DL.

This sequence belongs to the UPF0677 family.

Its function is as follows. Exhibits S-adenosyl-L-methionine-dependent methyltransferase activity. The sequence is that of Putative S-adenosyl-L-methionine-dependent methyltransferase MAP_3385 from Mycolicibacterium paratuberculosis (strain ATCC BAA-968 / K-10) (Mycobacterium paratuberculosis).